Reading from the N-terminus, the 522-residue chain is DEAD-box ATP-dependent RNA helicase 1 (522 aa).

Positions 30-59 (CALDTLPCLNPKLKKALENMGISSLFPVQV) match the Q motif motif. One can recognise a Helicase ATP-binding domain in the interval 66-297 (IGPGGFERDI…QLDLHHPLFM (232 aa)). Position 79-86 (79-86 (SPTGSGKT)) interacts with ATP. Residues 207–210 (DETD) carry the DEAD box motif. The region spanning 325 to 475 (YLVALLKSWE…PIPPTSLDSI (151 aa)) is the Helicase C-terminal domain. Residues 490–522 (VESEAPKKGRQAFRHNSRTGNSQTKLNKPRSEA) are disordered. Residues 497 to 506 (KGRQAFRHNS) show a composition bias toward basic residues.

This sequence belongs to the DEAD box helicase family. DDX51/DBP6 subfamily.

It catalyses the reaction ATP + H2O = ADP + phosphate + H(+). This is DEAD-box ATP-dependent RNA helicase 1 (RH1) from Arabidopsis thaliana (Mouse-ear cress).